We begin with the raw amino-acid sequence, 337 residues long: DNA-directed RNA polymerase subunit alpha (337 aa).

Residues 1 to 233 (MVREKVTVST…DLFIPFLHAQ (233 aa)) are alpha N-terminal domain (alpha-NTD). Residues 267–337 (IALKYIFIDQ…FTVDLPKNKF (71 aa)) are alpha C-terminal domain (alpha-CTD).

This sequence belongs to the RNA polymerase alpha chain family. In terms of assembly, in plastids the minimal PEP RNA polymerase catalytic core is composed of four subunits: alpha, beta, beta', and beta''. When a (nuclear-encoded) sigma factor is associated with the core the holoenzyme is formed, which can initiate transcription.

The protein resides in the plastid. The protein localises to the chloroplast. The enzyme catalyses RNA(n) + a ribonucleoside 5'-triphosphate = RNA(n+1) + diphosphate. Functionally, DNA-dependent RNA polymerase catalyzes the transcription of DNA into RNA using the four ribonucleoside triphosphates as substrates. The polypeptide is DNA-directed RNA polymerase subunit alpha (Platanus occidentalis (Sycamore)).